The primary structure comprises 722 residues: Ribosomal RNA large subunit methyltransferase K/L (722 aa).

Residues 55-167 (TGYRACLWSR…GNEGTLYLDL (113 aa)) enclose the THUMP domain.

The protein belongs to the methyltransferase superfamily. RlmKL family.

It localises to the cytoplasm. It carries out the reaction guanosine(2445) in 23S rRNA + S-adenosyl-L-methionine = N(2)-methylguanosine(2445) in 23S rRNA + S-adenosyl-L-homocysteine + H(+). It catalyses the reaction guanosine(2069) in 23S rRNA + S-adenosyl-L-methionine = N(2)-methylguanosine(2069) in 23S rRNA + S-adenosyl-L-homocysteine + H(+). In terms of biological role, specifically methylates the guanine in position 2445 (m2G2445) and the guanine in position 2069 (m7G2069) of 23S rRNA. This Desulfotalea psychrophila (strain LSv54 / DSM 12343) protein is Ribosomal RNA large subunit methyltransferase K/L.